We begin with the raw amino-acid sequence, 323 residues long: Beta-ketoacyl-[acyl-carrier-protein] synthase III (323 aa).

Catalysis depends on residues Cys114 and His250. The interval 251-255 is ACP-binding; the sequence is QANIR. Asn280 is a catalytic residue.

This sequence belongs to the thiolase-like superfamily. FabH family. As to quaternary structure, homodimer.

It is found in the cytoplasm. It catalyses the reaction malonyl-[ACP] + acetyl-CoA + H(+) = 3-oxobutanoyl-[ACP] + CO2 + CoA. The protein operates within lipid metabolism; fatty acid biosynthesis. Catalyzes the condensation reaction of fatty acid synthesis by the addition to an acyl acceptor of two carbons from malonyl-ACP. Catalyzes the first condensation reaction which initiates fatty acid synthesis and may therefore play a role in governing the total rate of fatty acid production. Possesses both acetoacetyl-ACP synthase and acetyl transacylase activities. Its substrate specificity determines the biosynthesis of branched-chain and/or straight-chain of fatty acids. In Ruegeria pomeroyi (strain ATCC 700808 / DSM 15171 / DSS-3) (Silicibacter pomeroyi), this protein is Beta-ketoacyl-[acyl-carrier-protein] synthase III.